A 171-amino-acid chain; its full sequence is MTAILVTGYRSFELGIFSEKDKRVAIIKKAIERDLIAYLEEGVDWFIFTGNLGFEQWALEVANDLKKTYPLKTATIFAFETHGSTWNDRNQQQLQQFRETDFVKYSYPSYESPKQLKSYHHFLIHNTDGAYLFYDSEHETRLSYLVAAMKEQPCYPLSFLNFERLNDIADE.

The protein belongs to the UPF0398 family.

This is UPF0398 protein SEQ_1788 from Streptococcus equi subsp. equi (strain 4047).